We begin with the raw amino-acid sequence, 219 residues long: 7-methyl-GTP pyrophosphatase (219 aa).

The active-site Proton acceptor is D89.

It belongs to the Maf family. YceF subfamily. A divalent metal cation serves as cofactor.

Its subcellular location is the cytoplasm. The catalysed reaction is N(7)-methyl-GTP + H2O = N(7)-methyl-GMP + diphosphate + H(+). Nucleoside triphosphate pyrophosphatase that hydrolyzes 7-methyl-GTP (m(7)GTP). May have a dual role in cell division arrest and in preventing the incorporation of modified nucleotides into cellular nucleic acids. The protein is 7-methyl-GTP pyrophosphatase of Polaromonas sp. (strain JS666 / ATCC BAA-500).